A 248-amino-acid polypeptide reads, in one-letter code: MAKPEYYYGVHSVESLLELEPERVLTLFTLKGRDDQRLQKILELAEPFGISVQKASRDSLEKLAGLPFHQGVVAAVRPHPVLNEKDLDQLLQNNDQALLLALDQVTDPHNLGACIRTAAAMGIAAVIVPRDRSASLTPTARKVAAGGAEKVKFIQVTNLARTLAHIKAHFFVKVVGTMLDEKALPIQKYDFSGNVAIVMGAEDTGLRPITQSQCDQTVYIPMSGNLQSLNVSVAAGMALYEACRQRLG.

Residues Gly-200, Ile-220, and Leu-229 each coordinate S-adenosyl-L-methionine.

Belongs to the class IV-like SAM-binding methyltransferase superfamily. RNA methyltransferase TrmH family. RlmB subfamily.

The protein localises to the cytoplasm. The catalysed reaction is guanosine(2251) in 23S rRNA + S-adenosyl-L-methionine = 2'-O-methylguanosine(2251) in 23S rRNA + S-adenosyl-L-homocysteine + H(+). Its function is as follows. Specifically methylates the ribose of guanosine 2251 in 23S rRNA. The polypeptide is 23S rRNA (guanosine-2'-O-)-methyltransferase RlmB (Acinetobacter baylyi (strain ATCC 33305 / BD413 / ADP1)).